Consider the following 468-residue polypeptide: UDP-N-acetylmuramate--L-alanine ligase (468 aa).

Position 114-120 (114-120) interacts with ATP; it reads GTHGKTT.

The protein belongs to the MurCDEF family.

Its subcellular location is the cytoplasm. It carries out the reaction UDP-N-acetyl-alpha-D-muramate + L-alanine + ATP = UDP-N-acetyl-alpha-D-muramoyl-L-alanine + ADP + phosphate + H(+). The protein operates within cell wall biogenesis; peptidoglycan biosynthesis. In terms of biological role, cell wall formation. The polypeptide is UDP-N-acetylmuramate--L-alanine ligase (Rhodopseudomonas palustris (strain HaA2)).